Consider the following 340-residue polypeptide: Phosphoribosylformylglycinamidine cyclo-ligase (340 aa).

Belongs to the AIR synthase family.

The protein resides in the cytoplasm. The enzyme catalyses 2-formamido-N(1)-(5-O-phospho-beta-D-ribosyl)acetamidine + ATP = 5-amino-1-(5-phospho-beta-D-ribosyl)imidazole + ADP + phosphate + H(+). Its pathway is purine metabolism; IMP biosynthesis via de novo pathway; 5-amino-1-(5-phospho-D-ribosyl)imidazole from N(2)-formyl-N(1)-(5-phospho-D-ribosyl)glycinamide: step 2/2. The polypeptide is Phosphoribosylformylglycinamidine cyclo-ligase (Streptococcus sanguinis (strain SK36)).